The chain runs to 364 residues: tRNA-specific 2-thiouridylase MnmA 1 (364 aa).

Residues 11–18 and phenylalanine 37 contribute to the ATP site; that span reads GMSGGTDS. Cysteine 96 serves as the catalytic Nucleophile. An intrachain disulfide couples cysteine 96 to cysteine 193. Glycine 120 serves as a coordination point for ATP. Residues 142–144 form an interaction with tRNA region; sequence KDQ. Cysteine 193 functions as the Cysteine persulfide intermediate in the catalytic mechanism. The tract at residues 309 to 310 is interaction with tRNA; that stretch reads RY.

This sequence belongs to the MnmA/TRMU family.

Its subcellular location is the cytoplasm. The catalysed reaction is S-sulfanyl-L-cysteinyl-[protein] + uridine(34) in tRNA + AH2 + ATP = 2-thiouridine(34) in tRNA + L-cysteinyl-[protein] + A + AMP + diphosphate + H(+). Functionally, catalyzes the 2-thiolation of uridine at the wobble position (U34) of tRNA, leading to the formation of s(2)U34. In Bacteroides fragilis (strain YCH46), this protein is tRNA-specific 2-thiouridylase MnmA 1.